Consider the following 123-residue polypeptide: Modulator protein MzrA (123 aa).

The Cytoplasmic portion of the chain corresponds to 1 to 8 (MIKRPRWQ). Residues 9-29 (YVLLIALALLALATLLVPCMV) form a helical membrane-spanning segment. The Periplasmic portion of the chain corresponds to 30–123 (RTESELRIRA…EFARAPLNLG (94 aa)).

The protein belongs to the MzrA family. As to quaternary structure, interacts with EnvZ.

It localises to the cell inner membrane. Its function is as follows. Modulates the activity of the EnvZ/OmpR two-component regulatory system, probably by directly modulating EnvZ enzymatic activity and increasing stability of phosphorylated OmpR. In Serratia proteamaculans (strain 568), this protein is Modulator protein MzrA.